Consider the following 162-residue polypeptide: 6,7-dimethyl-8-ribityllumazine synthase (162 aa).

Residues phenylalanine 22, 56–58, and 80–82 each bind 5-amino-6-(D-ribitylamino)uracil; these read TFE and AVI. 85 to 86 serves as a coordination point for (2S)-2-hydroxy-3-oxobutyl phosphate; the sequence is GT. Histidine 88 acts as the Proton donor in catalysis. Methionine 113 lines the 5-amino-6-(D-ribitylamino)uracil pocket. Residue arginine 127 coordinates (2S)-2-hydroxy-3-oxobutyl phosphate.

It belongs to the DMRL synthase family.

It catalyses the reaction (2S)-2-hydroxy-3-oxobutyl phosphate + 5-amino-6-(D-ribitylamino)uracil = 6,7-dimethyl-8-(1-D-ribityl)lumazine + phosphate + 2 H2O + H(+). Its pathway is cofactor biosynthesis; riboflavin biosynthesis; riboflavin from 2-hydroxy-3-oxobutyl phosphate and 5-amino-6-(D-ribitylamino)uracil: step 1/2. Its function is as follows. Catalyzes the formation of 6,7-dimethyl-8-ribityllumazine by condensation of 5-amino-6-(D-ribitylamino)uracil with 3,4-dihydroxy-2-butanone 4-phosphate. This is the penultimate step in the biosynthesis of riboflavin. This is 6,7-dimethyl-8-ribityllumazine synthase from Anaeromyxobacter dehalogenans (strain 2CP-C).